The following is a 256-amino-acid chain: Floral homeotic protein APETALA 1 (256 aa).

Positions 1–61 constitute an MADS-box domain; it reads MGRGRVQLKR…GKLFEYSTDS (61 aa). Positions 88-178 constitute a K-box domain; it reads NTNWSMEYNR…SKQIKEREKI (91 aa). A disordered region spans residues 184–206; sequence EQWDQQNHGHNMPPPPPPQQHQI.

In terms of assembly, homodimer capable of binding to CArG-box sequences.

Its subcellular location is the nucleus. Functionally, transcription factor that promotes early floral meristem identity in synergy with LEAFY. Displays a redundant function with CAULIFLOWER in the up-regulation of LEAFY. Required subsequently for the transition of an inflorescence meristem into a floral meristem, and for the normal development of sepals and petals in flowers. Regulates positively B class homeotic proteins. The polypeptide is Floral homeotic protein APETALA 1 (AP1) (Arabidopsis lyrata subsp. lyrata (Lyre-leaved rock-cress)).